The sequence spans 278 residues: Autotransporter adhesin BtaF (278 aa).

An N-terminal signal peptide occupies residues 1–29 (MKLPPVFVFELVENQGLANIALIRPRVIA). The tract at residues 30-182 (PDNNLRPGGI…RAAIRQNSAA (153 aa)) is surface exposed passenger domain. The interval 186 to 224 (LGQRVDGLQGQINSARKEARAGAANAAALSGLRYDNRPG) is outer membrane translocation of the passenger domain. The interval 225–278 (KVSIATGVGGFKGSTALAAGIGYTSKNENARYNVSVAYNEAGTSWNAGASFTLN) is translocator domain.

The protein belongs to the autotransporter-2 (AT-2) (TC 1.B.40) family. As to quaternary structure, homotrimer.

It localises to the cell surface. The protein resides in the cell outer membrane. In terms of biological role, participates in bacterial attachment to several surfaces, including various extracellular matrix (ECM) components and a hydrophobic abiotic surface. Involved in adhesion to host epithelial cells and is required for full virulence in mice. Also implicated in the resistance to porcine serum. The polypeptide is Autotransporter adhesin BtaF (Brucella suis biovar 1 (strain 1330)).